The sequence spans 628 residues: Forkhead box protein O (628 aa).

Disordered regions lie at residues Arg-39–Gln-77, Lys-182–Lys-205, Gly-217–Pro-269, Gln-316–Tyr-359, and Asn-389–Val-415. Phosphothreonine; by PKB/AKT1 is present on Thr-44. The segment covering Thr-63 to Gln-77 has biased composition (polar residues). Residue Ser-75 is modified to Phosphoserine. A DNA-binding region (fork-head) is located at residues Trp-95 to Gly-201. Position 190 is a phosphoserine; by PKB/AKT1 (Ser-190). Polar residues-rich tracts occupy residues Ala-221–Ser-230 and Arg-256–Gly-265. Residue Ser-259 is modified to Phosphoserine; by PKB/AKT1. Phosphoserine occurs at positions 262, 263, and 268. The segment covering Ser-328–Pro-337 has biased composition (pro residues). The segment covering Pro-338 to Ala-351 has biased composition (low complexity). A compositionally biased stretch (polar residues) spans Ser-402 to Asn-414.

In terms of assembly, interacts with melt.

The protein resides in the cytoplasm. The protein localises to the nucleus. Transcription factor involved in the regulation of the insulin signaling pathway. Consistently activates both the downstream target Thor\d4EBP and the feedback control target InR. Involved in negative regulation of the cell cycle, modulating cell growth and proliferation. In response to cellular stresses, such as nutrient deprivation or increased levels of reactive oxygen species, foxo is activated and inhibits growth through the action of target genes such as Thor. Foxo activated in the adult fat body can regulate lifespan in adults; an insulin peptide itself may function as one secondary messenger of insulin-regulated aging. Also regulates Lip4, homolog of human acid lipases, thereby acting as a key modulator of lipid metabolism by insulin signaling and integrates insulin responses to glucose and lipid homeostasis. In Drosophila yakuba (Fruit fly), this protein is Forkhead box protein O.